The sequence spans 256 residues: Nuclear shuttle protein (256 aa).

Residues 1–53 (MYPSRNKRGSYFNQRRQYSRNHVWKRPTAAKRHDWKRRPSNTSKPNDEPKMSA) form a disordered region. Over residues 17–39 (QYSRNHVWKRPTAAKRHDWKRRP) the composition is skewed to basic residues. The short motif at 21–42 (NHVWKRPTAAKRHDWKRRPSNT) is the Bipartite nuclear localization signal element. The Nuclear localization signal signature appears at 81–96 (DLGRSEPNRSRSYIRL). Positions 150-187 (ELFGARIHSHGNLSVTPALKDRYYIRHVCKRVLSVEKD) are interaction with Arabidopsis thaliana NSI protein.

Belongs to the begomovirus nuclear shuttle protein family. In terms of assembly, binds to single-stranded and double-stranded viral DNA. Interacts with the host nuclear shuttle interacting (NSI) protein. This interaction may allow NSP to recruit NSI monomers to the viral genome and thus regulate nuclear export of viral genome by NSP.

Its subcellular location is the host nucleus. The protein localises to the host cytoplasm. It is found in the host cell membrane. Functionally, binds to the genomic viral ssDNA, shuttles it into and out of the cell nucleus. Begomoviruses use 2 proteins to transport their DNA from cell to cell. The nuclear shuttle protein (NSP) shuttles it between nucleus and cytoplasm and the movement protein (MP) probably transports the DNA-NSP complex to the cell periphery and facilitates movement across the cell wall. The sequence is that of Nuclear shuttle protein from Abutilon mosaic virus (isolate West India) (AbMV).